A 116-amino-acid chain; its full sequence is Large ribosomal subunit protein uL24 (116 aa).

The segment at 1–21 is disordered; it reads MATNNGAGKARHKFHVKKGDT.

It belongs to the universal ribosomal protein uL24 family. In terms of assembly, part of the 50S ribosomal subunit.

Its function is as follows. One of two assembly initiator proteins, it binds directly to the 5'-end of the 23S rRNA, where it nucleates assembly of the 50S subunit. Functionally, one of the proteins that surrounds the polypeptide exit tunnel on the outside of the subunit. This chain is Large ribosomal subunit protein uL24, found in Gloeobacter violaceus (strain ATCC 29082 / PCC 7421).